The chain runs to 633 residues: Probable extracellular metalloproteinase 5 (633 aa).

Residues 1–20 form the signal peptide; it reads MHGLLLAAAGLLSLPLHVLA. The propeptide occupies 21–244; it reads HPQPSTNLAG…VHNVVDYVSH (224 aa). A glycan (N-linked (GlcNAc...) asparagine) is linked at Asn-285. His-428 is a binding site for Zn(2+). Glu-429 is an active-site residue. His-432 is a binding site for Zn(2+). N-linked (GlcNAc...) asparagine glycosylation is found at Asn-592 and Asn-621.

Belongs to the peptidase M36 family. It depends on Zn(2+) as a cofactor.

The protein localises to the secreted. Secreted metalloproteinase probably acting as a virulence factor. The sequence is that of Probable extracellular metalloproteinase 5 (MEP5) from Arthroderma benhamiae (strain ATCC MYA-4681 / CBS 112371) (Trichophyton mentagrophytes).